We begin with the raw amino-acid sequence, 647 residues long: ATP-dependent zinc metalloprotease FtsH (647 aa).

The segment at methionine 1–proline 33 is disordered. Residues methionine 1–histidine 39 are Cytoplasmic-facing. The helical transmembrane segment at phenylalanine 40–glycine 60 threads the bilayer. Residues glutamate 61 to tryptophan 134 are Periplasmic-facing. A helical transmembrane segment spans residues leucine 135–leucine 155. Residues methionine 156–alanine 647 are Cytoplasmic-facing. Glycine 227–threonine 234 provides a ligand contact to ATP. Histidine 449 lines the Zn(2+) pocket. Glutamate 450 is an active-site residue. 2 residues coordinate Zn(2+): histidine 453 and aspartate 526.

It in the central section; belongs to the AAA ATPase family. In the C-terminal section; belongs to the peptidase M41 family. As to quaternary structure, homohexamer. It depends on Zn(2+) as a cofactor.

Its subcellular location is the cell inner membrane. Functionally, acts as a processive, ATP-dependent zinc metallopeptidase for both cytoplasmic and membrane proteins. Plays a role in the quality control of integral membrane proteins. The polypeptide is ATP-dependent zinc metalloprotease FtsH (Syntrophobacter fumaroxidans (strain DSM 10017 / MPOB)).